The following is a 309-amino-acid chain: Olfactory receptor 1L8 (309 aa).

The Extracellular segment spans residues 1–26 (MERINHTSSVSEFILLGLSSRPEDQK). Residue N5 is glycosylated (N-linked (GlcNAc...) asparagine). The helical transmembrane segment at 27–50 (TLFVLFLIVYLVTITGNLLIILAI) threads the bilayer. The Cytoplasmic portion of the chain corresponds to 51–58 (RFNPHLQT). The helical transmembrane segment at 59–80 (PMYFFLSFLSLTDICFTTSVVP) threads the bilayer. At 81–101 (KMLMNFLSEKKTISYAGCLTQ) the chain is on the extracellular side. Residues C98 and C190 are joined by a disulfide bond. A helical transmembrane segment spans residues 102 to 121 (MYFLYALGNSDSCLLAVMAF). The Cytoplasmic segment spans residues 122 to 140 (DRYVAVCDPFHYVTTMSHH). The chain crosses the membrane as a helical span at residues 141–159 (HCVLLVAFSCSFPHLHSLL). The Extracellular portion of the chain corresponds to 160 to 197 (HTLLLNRLTFCDSNVIHHFLCDLSPVLKLSCSSIFVNE). The chain crosses the membrane as a helical span at residues 198–220 (IVQMTEAPIVLVTRFLCIAFSYI). Residues 221–237 (RILTTVLKIPSTSGKRK) are Cytoplasmic-facing. A helical transmembrane segment spans residues 238 to 260 (AFSTCGFYLTVVTLFYGSIFCVY). Over 261–272 (LQPPSTYAVKDH) the chain is Extracellular. Residues 273 to 292 (VATIVYTVLSSMLNPFIYSL) traverse the membrane as a helical segment. Over 293 to 309 (RNKDLKQGLRKLMSKRS) the chain is Cytoplasmic.

It belongs to the G-protein coupled receptor 1 family.

It is found in the cell membrane. Functionally, odorant receptor. The polypeptide is Olfactory receptor 1L8 (OR1L8) (Homo sapiens (Human)).